Consider the following 1353-residue polypeptide: Adenylate cyclase type 9 (1353 aa).

2 disordered regions span residues 1–27 (MASS…DSNS) and 51–73 (SSSC…GGRL). At 1–117 (MASSPHQQLL…CFPQTQRRFR (117 aa)) the chain is on the cytoplasmic side. Residues 16–27 (EVSCDSSGDSNS) are compositionally biased toward polar residues. A compositionally biased stretch (low complexity) spans 51 to 66 (SSSCSSSGDSGGLPRR). Residues 118 to 138 (YALFYVGFACLLWSIYFAVHM) form a helical membrane-spanning segment. The Extracellular portion of the chain corresponds to 139 to 141 (KSK). The helical transmembrane segment at 142 to 162 (VIVMVVPALCFLVVCVGFFLF) threads the bilayer. Over 163-171 (TFTKLYARH) the chain is Cytoplasmic. The chain crosses the membrane as a helical span at residues 172-192 (YAWTSLALTLLVFALTLAAQF). The Extracellular portion of the chain corresponds to 193-215 (QVWTPLSGRVDSSNHTLTATPAD). Asparagine 206 carries N-linked (GlcNAc...) asparagine glycosylation. Residues 216–235 (TCLSQVGSFSICIEVLLLLY) traverse the membrane as a helical segment. The Cytoplasmic segment spans residues 236–241 (TVMQLP). A helical transmembrane segment spans residues 242–259 (LYLSLFLGVVYSVLFETF). Residues 260 to 280 (GYHFRNEDCYPSPGPGALHWE) are Extracellular-facing. The chain crosses the membrane as a helical span at residues 281–301 (LLSRALLHVCIHAIGIHLFVM). The Cytoplasmic portion of the chain corresponds to 302–786 (SQVRSRSTFL…VKTFASATFS (485 aa)). Positions 349-375 (QGDEESENSVKRHATSSPKNRKKKSSI) are disordered. The segment covering 359–374 (KRHATSSPKNRKKKSS) has biased composition (basic residues). Mg(2+) is bound by residues aspartate 399, isoleucine 400, and aspartate 443. Residues 399–404 (DIVGFT), 441–443 (LGD), and arginine 487 each bind ATP. Disordered regions lie at residues 596–615 (DSRE…GSVS) and 641–685 (SEAG…EEKL). Residues serine 610 and serine 613 each carry the phosphoserine modification. Residues 661–676 (STKASGGPNSKTQNGL) show a composition bias toward polar residues. Serine 688, serine 691, and serine 706 each carry phosphoserine. A helical membrane pass occupies residues 787–807 (SLLDVFLSTTVFLILSITCFL). At 808-818 (KYGATATPPPP) the chain is on the extracellular side. Residues 819–839 (AALAVFGADLLLEVLSLIVSI) traverse the membrane as a helical segment. The Cytoplasmic segment spans residues 840–867 (RMVFFLEDVMTCTKWLLEWIAGWLPRHC). Residues 868-888 (IGAILVSLPALAVYSHITSEF) form a helical membrane-spanning segment. Over 889–891 (ETN) the chain is Extracellular. Residues 892 to 912 (IHVTMFTGSAVLVAVVHYCNF) form a helical membrane-spanning segment. Residues 913-920 (CQLSSWMR) lie on the Cytoplasmic side of the membrane. The chain crosses the membrane as a helical span at residues 921-941 (SSLATIVGAGLLLLLHISLCQ). Residues 942–975 (DSSIVMSPLDSAQNFSAQRNPCNSSVLQDGRRPA) are Extracellular-facing. 2 N-linked (GlcNAc...) asparagine glycosylation sites follow: asparagine 955 and asparagine 964. Residues 976 to 996 (SLIGKELILTFFLLLLLVWFL) form a helical membrane-spanning segment. The Cytoplasmic segment spans residues 997–1353 (NREFEVSYRL…LSKLNVSKSV (357 aa)). Residues lysine 1108, 1185 to 1187 (DIW), 1192 to 1196 (NIASR), and lysine 1232 contribute to the ATP site. Phosphoserine occurs at positions 1257, 1259, 1295, 1307, and 1332. The tract at residues 1290–1314 (KASLGSDDSTQAKEARLSSKRSWRE) is disordered. Residues 1299–1314 (TQAKEARLSSKRSWRE) show a composition bias toward basic and acidic residues.

Belongs to the adenylyl cyclase class-4/guanylyl cyclase family. It depends on Mg(2+) as a cofactor. Mn(2+) is required as a cofactor. As to expression, detected in brain, spleen, lung, liver and testis (at protein level). Detected in brain, especially in hippocampus, cerebellum and neocortex. Found in decreasing order in skeletal muscle, heart, adrenal gland, ovary and brain; and to a lesser extent, in kidney, liver, testis, lung, thymus and spleen.

Its subcellular location is the cell membrane. The catalysed reaction is ATP = 3',5'-cyclic AMP + diphosphate. Its activity is regulated as follows. Insensitive to calcium/calmodulin, forskolin and somatostatin. Stimulated by beta-adrenergic receptor activation. Activity is down-regulated by calcium/calcineurin. In terms of biological role, adenylyl cyclase that catalyzes the formation of the signaling molecule cAMP in response to activation of G protein-coupled receptors. Contributes to signaling cascades activated by CRH (corticotropin-releasing factor), corticosteroids and by beta-adrenergic receptors. This chain is Adenylate cyclase type 9 (Adcy9), found in Mus musculus (Mouse).